The sequence spans 242 residues: Small ribosomal subunit protein uS2 (242 aa).

This sequence belongs to the universal ribosomal protein uS2 family.

The chain is Small ribosomal subunit protein uS2 from Aeromonas salmonicida (strain A449).